The primary structure comprises 41 residues: Bacteriocin bavaricin-A (41 aa).

It belongs to the bacteriocin class IIA/YGNGV family.

The protein localises to the secreted. This heat stable bacteriocin shows activity against species of Lactobacillus, Listeria monocytogenes, Pediococcus, Enterococcus, Leuconostoc and Lactococcus. The chain is Bacteriocin bavaricin-A from Latilactobacillus sakei (Lactobacillus sakei).